Consider the following 310-residue polypeptide: Tagatose-6-phosphate kinase (310 aa).

It belongs to the carbohydrate kinase PfkB family. LacC subfamily.

It catalyses the reaction D-tagatofuranose 6-phosphate + ATP = D-tagatofuranose 1,6-bisphosphate + ADP + H(+). Its pathway is carbohydrate metabolism; D-tagatose 6-phosphate degradation; D-glyceraldehyde 3-phosphate and glycerone phosphate from D-tagatose 6-phosphate: step 1/2. The protein is Tagatose-6-phosphate kinase of Streptococcus uberis (strain ATCC BAA-854 / 0140J).